Here is a 158-residue protein sequence, read N- to C-terminus: Transcription elongation factor GreA (158 aa).

The stretch at 10–75 (TKEGKEKLEQ…QMLENMIRNA (66 aa)) forms a coiled coil.

It belongs to the GreA/GreB family.

In terms of biological role, necessary for efficient RNA polymerase transcription elongation past template-encoded arresting sites. The arresting sites in DNA have the property of trapping a certain fraction of elongating RNA polymerases that pass through, resulting in locked ternary complexes. Cleavage of the nascent transcript by cleavage factors such as GreA or GreB allows the resumption of elongation from the new 3'terminus. GreA releases sequences of 2 to 3 nucleotides. This Geobacillus kaustophilus (strain HTA426) protein is Transcription elongation factor GreA.